The sequence spans 177 residues: Bifunctional protein PyrR (177 aa).

Residues 99-111 carry the PRPP-binding motif; sequence VVLVDDVLFTGRT.

It belongs to the purine/pyrimidine phosphoribosyltransferase family. PyrR subfamily.

It carries out the reaction UMP + diphosphate = 5-phospho-alpha-D-ribose 1-diphosphate + uracil. Regulates the transcription of the pyrimidine nucleotide (pyr) operon in response to exogenous pyrimidines. In terms of biological role, also displays a weak uracil phosphoribosyltransferase activity which is not physiologically significant. This Geobacter sulfurreducens (strain ATCC 51573 / DSM 12127 / PCA) protein is Bifunctional protein PyrR.